Here is a 931-residue protein sequence, read N- to C-terminus: MIMDKTYQPDRIEQSWYENWEQAGHFKPSGQGDPFCIMIPPPNVTGSLHMGHAFQDTIMDTLVRYRRMQGRNTLWQVGTDHAGIATQMVVERKLAGEGTNRHELGREKFLDKVWEWKRESGGTITRQLRRMGASVDWTRERFTMDDGLSNAVREVFVRLHKEGLIYRGKRLVNWDPALHTAISDLEVENVEEQGHMWHFRYPLSDGSGHLVVATTRPETMLGDTAVAVHPQDPRYKDMIGKSIRLPLADRNIPIIADDYVDPDFGSGCVKITPAHDFNDYEVGKRHDLPMINILTIDAALNDEVPEGYRGLDRVEARKKVVDDLDALGLLEKVDDHTLQVPRGDRSGVVIEPYLTDQWFVAVEELAKPAIAAVENGDIQFVPKNYENMYFSWMRDLQDWCISRQLWWGHRIPAWYDADGNVYVGRDEEEVRAENNLGDTPLSQDDDVLDTWFSSALWTFSTLGWPDDTDALRTFHPTDVLVTGFDIIFFWVARMIMMTLKFTDQVPFKKVYVHGLVRDNDGQKMSKSKGNVLDPLDMIDGITLDALIDKRTKGLMQPQKEKQITKRTNKDFPDGINPYGTDALRFTFLSLASTGRDIKWDMGRIEGYRNFCNKIWNAARYVMMNTEGEDCGIDTDSEVELSLADRWIISALQRAELEVSEALDSFRFDVASHAAYEFIWNEYCDWYLELSKPVLWGDEYSDAQKRGTRRTLVTVLEAILRMAHPFMPFITEEIWQKVGPLAGKASAAGKGEKTDTIMLQPFPASEPAKIDTNAETGAEWVKAVISAVRNIRGEMGIPLGKALPIYLHNGKDSDKALLDANRVFLCKLAKLESITWLTAEDSAPASATALVGDMEILVPMAGLIDKEAEIERLSKEIEKLRKEVGRAEGKLKNPKFVDKAPQAVVDKEKAKLDDYRSQLAKLEEQLEKIKYL.

Residues 42 to 52 (PNVTGSLHMGH) carry the 'HIGH' region motif. A 'KMSKS' region motif is present at residues 523–527 (KMSKS). Lysine 526 contributes to the ATP binding site. A coiled-coil region spans residues 859–931 (MAGLIDKEAE…EEQLEKIKYL (73 aa)).

The protein belongs to the class-I aminoacyl-tRNA synthetase family. ValS type 1 subfamily. As to quaternary structure, monomer.

It localises to the cytoplasm. It catalyses the reaction tRNA(Val) + L-valine + ATP = L-valyl-tRNA(Val) + AMP + diphosphate. In terms of biological role, catalyzes the attachment of valine to tRNA(Val). As ValRS can inadvertently accommodate and process structurally similar amino acids such as threonine, to avoid such errors, it has a 'posttransfer' editing activity that hydrolyzes mischarged Thr-tRNA(Val) in a tRNA-dependent manner. This is Valine--tRNA ligase from Alcanivorax borkumensis (strain ATCC 700651 / DSM 11573 / NCIMB 13689 / SK2).